Here is a 217-residue protein sequence, read N- to C-terminus: Protein-L-isoaspartate O-methyltransferase (217 aa).

The active site involves Ser-62.

It belongs to the methyltransferase superfamily. L-isoaspartyl/D-aspartyl protein methyltransferase family.

The protein localises to the cytoplasm. The catalysed reaction is [protein]-L-isoaspartate + S-adenosyl-L-methionine = [protein]-L-isoaspartate alpha-methyl ester + S-adenosyl-L-homocysteine. Its function is as follows. Catalyzes the methyl esterification of L-isoaspartyl residues in peptides and proteins that result from spontaneous decomposition of normal L-aspartyl and L-asparaginyl residues. It plays a role in the repair and/or degradation of damaged proteins. The protein is Protein-L-isoaspartate O-methyltransferase of Trichlorobacter lovleyi (strain ATCC BAA-1151 / DSM 17278 / SZ) (Geobacter lovleyi).